A 292-amino-acid polypeptide reads, in one-letter code: Zinc finger protein OZF (292 aa).

10 consecutive C2H2-type zinc fingers follow at residues 16 to 38, 44 to 66, 72 to 94, 100 to 122, 128 to 150, 156 to 178, 184 to 206, 212 to 234, 240 to 262, and 268 to 290; these read FACKVCGKVFSHKSNLTEHEHFH, FECNECGKAFSQKQYVIKHQNTH, FECNECGKSFSQKENLLTHQKIH, FECKDCGKAFIQKSNLIRHQRTH, FVCKECGKTFSGKSNLTEHEKIH, FKCSECGTAFGQKKYLIKHQNIH, YECNECGKAFSQRTSLIVHVRIH, YECNVCGKAFSQSSSLTVHVRSH, YGCNECGKAFSQFSTLALHLRIH, and YQCSECGKAFSQKSHHIRHQKIH. Residues Lys-28, Lys-51, and Lys-56 each participate in a glycyl lysine isopeptide (Lys-Gly) (interchain with G-Cter in SUMO2) cross-link. Residues Lys-157 and Lys-169 each participate in a glycyl lysine isopeptide (Lys-Gly) (interchain with G-Cter in SUMO) cross-link. Residue Lys-173 forms a Glycyl lysine isopeptide (Lys-Gly) (interchain with G-Cter in SUMO2) linkage. Positions 212–292 are interaction with TERF2IP; the sequence is YECNVCGKAF…HIRHQKIHTH (81 aa).

The protein belongs to the krueppel C2H2-type zinc-finger protein family. Binds DNA. Interacts with SUMO conjugating enzyme UBC9/UBE2I. Interacts with the telomeric protein TERF2IP. Sumoylated. As to expression, liver, skeletal and heart muscle, mammary cells. Very low levels in brain, lung, placenta and kidney. Strongly overexpressed in many pancreas and colorectal cancers. Increased gene copy numbers are detected in 3 of 12 tumor cell lines and 2 of 12 primary pancreatic carcinomas. Overexpressed in 80% of colorectal cancers.

The protein localises to the nucleus. This Homo sapiens (Human) protein is Zinc finger protein OZF (ZNF146).